A 131-amino-acid chain; its full sequence is Holo-[acyl-carrier-protein] synthase (131 aa).

Mg(2+) is bound by residues Asp-8 and Glu-57.

This sequence belongs to the P-Pant transferase superfamily. AcpS family. It depends on Mg(2+) as a cofactor.

Its subcellular location is the cytoplasm. The enzyme catalyses apo-[ACP] + CoA = holo-[ACP] + adenosine 3',5'-bisphosphate + H(+). Functionally, transfers the 4'-phosphopantetheine moiety from coenzyme A to a Ser of acyl-carrier-protein. The sequence is that of Holo-[acyl-carrier-protein] synthase from Desulforudis audaxviator (strain MP104C).